Here is a 469-residue protein sequence, read N- to C-terminus: UDP-N-acetylmuramate--L-alanine ligase (469 aa).

112–118 contacts ATP; it reads GTHGKTT.

The protein belongs to the MurCDEF family.

It is found in the cytoplasm. The enzyme catalyses UDP-N-acetyl-alpha-D-muramate + L-alanine + ATP = UDP-N-acetyl-alpha-D-muramoyl-L-alanine + ADP + phosphate + H(+). The protein operates within cell wall biogenesis; peptidoglycan biosynthesis. Cell wall formation. This Leptothrix cholodnii (strain ATCC 51168 / LMG 8142 / SP-6) (Leptothrix discophora (strain SP-6)) protein is UDP-N-acetylmuramate--L-alanine ligase.